The following is a 253-amino-acid chain: Adapter protein MecA (253 aa).

It belongs to the MecA family. In terms of assembly, homodimer.

In terms of biological role, enables the recognition and targeting of unfolded and aggregated proteins to the ClpC protease or to other proteins involved in proteolysis. The protein is Adapter protein MecA of Streptococcus pyogenes serotype M18 (strain MGAS8232).